A 380-amino-acid chain; its full sequence is Cytochrome b (380 aa).

The next 4 membrane-spanning stretches (helical) occupy residues 34–54 (FGSLLGLCLVSQILTGLFLAM), 78–99 (WLLRNLHANGASFMFICLYMHI), 114–134 (WNIGVMLLVLTMATAFLGYVL), and 179–199 (FFAFHFFLPFMIAGLSVVHLL). 2 residues coordinate heme b: histidine 84 and histidine 98. The heme b site is built by histidine 183 and histidine 197. An a ubiquinone-binding site is contributed by histidine 202. A run of 4 helical transmembrane segments spans residues 227-247 (YKDVVGFVVLLAGLVFIALFS), 289-309 (LGGVVALAMSIVVLFFMPFVH), 321-341 (LAQVLFWLMVVNVLLLTWLGG), and 348-368 (YIFLGQAASVIYFVNILLFIP).

The protein belongs to the cytochrome b family. As to quaternary structure, the cytochrome bc1 complex contains 3 respiratory subunits (MT-CYB, CYC1 and UQCRFS1), 2 core proteins (UQCRC1 and UQCRC2) and probably 6 low-molecular weight proteins. Requires heme b as cofactor.

The protein localises to the mitochondrion inner membrane. Component of the ubiquinol-cytochrome c reductase complex (complex III or cytochrome b-c1 complex) that is part of the mitochondrial respiratory chain. The b-c1 complex mediates electron transfer from ubiquinol to cytochrome c. Contributes to the generation of a proton gradient across the mitochondrial membrane that is then used for ATP synthesis. This chain is Cytochrome b (MT-CYB), found in Branchiostoma lanceolatum (Common lancelet).